We begin with the raw amino-acid sequence, 132 residues long: Agouti-related protein (132 aa).

A signal peptide spans M1–G20. Positions A21 to R82 are excised as a propeptide. 5 disulfides stabilise this stretch: C87/C102, C94/C108, C101/C119, C105/C129, and C110/C117. One can recognise an Agouti domain in the interval C87–C129. An interaction with melanocortin receptors region spans residues R111 to F113.

In terms of assembly, interacts with melanocortin receptors MC3R, MC4R and MC5R. As to expression, expressed primarily in the adrenal gland, subthalamic nucleus, and hypothalamus, with a lower level of expression occurring in testis, lung, and kidney.

The protein localises to the secreted. It localises to the golgi apparatus lumen. In terms of biological role, plays a role in weight homeostasis. Involved in the control of feeding behavior through the central melanocortin system. Acts as alpha melanocyte-stimulating hormone antagonist by inhibiting cAMP production mediated by stimulation of melanocortin receptors within the hypothalamus and adrenal gland. Has very low activity with MC5R. Is an inverse agonist for MC3R and MC4R being able to suppress their constitutive activity. It promotes MC3R and MC4R endocytosis in an arrestin-dependent manner. The protein is Agouti-related protein (AGRP) of Homo sapiens (Human).